Reading from the N-terminus, the 160-residue chain is RNA pyrophosphohydrolase (160 aa).

The Nudix hydrolase domain maps to 10–154 (PYRKCVGVVL…KRDVYEQVFD (145 aa)). The Nudix box signature appears at 44 to 65 (GGIEDGEDARTAALRELVEETG).

Belongs to the Nudix hydrolase family. RppH subfamily. It depends on a divalent metal cation as a cofactor.

Functionally, accelerates the degradation of transcripts by removing pyrophosphate from the 5'-end of triphosphorylated RNA, leading to a more labile monophosphorylated state that can stimulate subsequent ribonuclease cleavage. In Dinoroseobacter shibae (strain DSM 16493 / NCIMB 14021 / DFL 12), this protein is RNA pyrophosphohydrolase.